We begin with the raw amino-acid sequence, 421 residues long: D-amino-acid oxidase (421 aa).

Residues A12, G13, A14, V15, G47, G64, I65, K225, A226, R359, G385, G388, and L389 each contribute to the FAD site. R359 is a binding site for D-proline. R359 provides a ligand contact to D-serine.

Belongs to the DAMOX/DASOX family. The cofactor is FAD.

The protein resides in the cytoplasm. It is found in the secreted. Its subcellular location is the cell wall. It carries out the reaction a D-alpha-amino acid + O2 + H2O = a 2-oxocarboxylate + H2O2 + NH4(+). Its function is as follows. Catalyzes the oxidative deamination of D-amino acids with broad substrate specificity. The sequence is that of D-amino-acid oxidase from Bradyrhizobium diazoefficiens (strain JCM 10833 / BCRC 13528 / IAM 13628 / NBRC 14792 / USDA 110).